The primary structure comprises 467 residues: Metal transporter cnnm-4 (467 aa).

Topologically, residues 1 to 110 are extracellular; it reads MELYAAGRYD…EIPEGKDKTR (110 aa). An N-linked (GlcNAc...) asparagine glycan is attached at N61. The CNNM transmembrane domain maps to 107 to 293; sequence DKTRVYFMMP…LEDEEAADGN (187 aa). Residues 111-131 form a helical membrane-spanning segment; the sequence is VYFMMPLLVLCLGLSATFSGL. Over 132-170 the chain is Cytoplasmic; sequence NLAIMSFSINDLKLIQESDSDKLMKQRAMDVMRLRRNSN. The chain crosses the membrane as a helical span at residues 171–191; sequence FVLVTIIFGNCFCNISITLLM. Topologically, residues 192–196 are extracellular; it reads NYFAE. The chain crosses the membrane as a helical span at residues 197-217; it reads FYGFGGFIFVELISTALLLIF. Topologically, residues 218 to 238 are cytoplasmic; it reads TEILPSLIFTKNALAIASRLQ. Residues 239–259 form a helical membrane-spanning segment; it reads YFVIFTMCITSPISYPLAMLL. Residues 260-467 lie on the Extracellular side of the membrane; the sequence is NIILGKENAD…IFDEKDARQE (208 aa). 2 consecutive CBS domains span residues 317-381 and 394-461; these read MTEI…GSDT and KRRK…IFDE. N364 is a glycosylation site (N-linked (GlcNAc...) asparagine).

This sequence belongs to the ACDP family.

Its subcellular location is the cell membrane. In terms of biological role, probable metal transporter. Probably acts redundantly with the other metal transport proteins cnnm-1, cnnm-2, cnnm-3 and cnnm-5 to regulate Mg(2+) homeostasis. This chain is Metal transporter cnnm-4, found in Caenorhabditis elegans.